Consider the following 508-residue polypeptide: Bifunctional purine biosynthesis protein PurH (508 aa).

The MGS-like domain maps to 1 to 144; sequence MTRALLSVSD…KNFASVLPIV (144 aa).

This sequence belongs to the PurH family.

It carries out the reaction (6R)-10-formyltetrahydrofolate + 5-amino-1-(5-phospho-beta-D-ribosyl)imidazole-4-carboxamide = 5-formamido-1-(5-phospho-D-ribosyl)imidazole-4-carboxamide + (6S)-5,6,7,8-tetrahydrofolate. It catalyses the reaction IMP + H2O = 5-formamido-1-(5-phospho-D-ribosyl)imidazole-4-carboxamide. Its pathway is purine metabolism; IMP biosynthesis via de novo pathway; 5-formamido-1-(5-phospho-D-ribosyl)imidazole-4-carboxamide from 5-amino-1-(5-phospho-D-ribosyl)imidazole-4-carboxamide (10-formyl THF route): step 1/1. The protein operates within purine metabolism; IMP biosynthesis via de novo pathway; IMP from 5-formamido-1-(5-phospho-D-ribosyl)imidazole-4-carboxamide: step 1/1. This Leuconostoc mesenteroides subsp. mesenteroides (strain ATCC 8293 / DSM 20343 / BCRC 11652 / CCM 1803 / JCM 6124 / NCDO 523 / NBRC 100496 / NCIMB 8023 / NCTC 12954 / NRRL B-1118 / 37Y) protein is Bifunctional purine biosynthesis protein PurH.